We begin with the raw amino-acid sequence, 327 residues long: Phenylalanine--tRNA ligase alpha subunit (327 aa).

Glutamate 252 contributes to the Mg(2+) binding site.

The protein belongs to the class-II aminoacyl-tRNA synthetase family. Phe-tRNA synthetase alpha subunit type 1 subfamily. Tetramer of two alpha and two beta subunits. It depends on Mg(2+) as a cofactor.

The protein localises to the cytoplasm. It carries out the reaction tRNA(Phe) + L-phenylalanine + ATP = L-phenylalanyl-tRNA(Phe) + AMP + diphosphate + H(+). In Shewanella denitrificans (strain OS217 / ATCC BAA-1090 / DSM 15013), this protein is Phenylalanine--tRNA ligase alpha subunit.